The chain runs to 727 residues: Epithelial splicing regulatory protein 2 (727 aa).

Residues 1-22 (MTPPPPPPPPPGPDPAADPAAD) form a disordered region. Ser-83 is modified (phosphoserine). RRM domains follow at residues 257-353 (TVVR…RFLS), 358-438 (VILR…RSTA), and 475-555 (DCVR…PCST). At Ser-573 the chain carries Phosphoserine.

This sequence belongs to the ESRP family. As to quaternary structure, interacts with RBPMS. As to expression, epithelial cell-specific.

The protein resides in the nucleus. Functionally, mRNA splicing factor that regulates the formation of epithelial cell-specific isoforms. Specifically regulates the expression of FGFR2-IIIb, an epithelial cell-specific isoform of FGFR2. Also regulates the splicing of CD44, CTNND1, ENAH, 3 transcripts that undergo changes in splicing during the epithelial-to-mesenchymal transition (EMT). Acts by directly binding specific sequences in mRNAs. Binds the GU-rich sequence motifs in the ISE/ISS-3, a cis-element regulatory region present in the mRNA of FGFR2. In Homo sapiens (Human), this protein is Epithelial splicing regulatory protein 2 (ESRP2).